The sequence spans 245 residues: Dehydrogenase/reductase SDR family member 6 (245 aa).

Residues 16–18, aspartate 37, and aspartate 58 contribute to the NAD(+) site; that span reads QGI. Arginine 144 provides a ligand contact to substrate. Tyrosine 147 (proton acceptor) is an active-site residue. Residues lysine 151 and 180 to 184 each bind NAD(+); that span reads VDTPS. Substrate contacts are provided by arginine 188 and arginine 205.

This sequence belongs to the short-chain dehydrogenases/reductases (SDR) family. In terms of assembly, homotetramer. Detected in liver, spleen and macrophages. Widely expressed.

Its subcellular location is the cytoplasm. The catalysed reaction is cis-4-hydroxy-L-proline + NAD(+) = 4-oxo-L-proline + NADH + H(+). The enzyme catalyses (R)-3-hydroxybutanoate + NAD(+) = acetoacetate + NADH + H(+). It functions in the pathway amino-acid metabolism. It participates in siderophore biosynthesis. Functionally, NAD(H)-dependent dehydrogenase/reductase with a preference for cyclic substrates. Catalyzes stereoselective conversion of 4-oxo-L-proline to cis-4-hydroxy-L-proline, likely a detoxification mechanism for ketoprolines. Mediates the formation of 2,5-dihydroxybenzoate (2,5-DHBA), a siderophore that chelates free cytoplasmic iron and associates with LCN2, thereby regulating iron transport and homeostasis while protecting cells against free radical-induced oxidative stress. The iron-siderophore complex is imported into mitochondria, providing an iron source for mitochondrial metabolic processes in particular heme synthesis. May act as a 3-hydroxybutyrate dehydrogenase. In terms of biological role, (Microbial infection) May play a role in susceptibility to bacterial infection by providing an assimilable source of iron that is exploited by pathogenic bacteria. Host iron-siderophore complexes can be used by bacteria to promote their own growth and pathogenicity. The chain is Dehydrogenase/reductase SDR family member 6 from Mus musculus (Mouse).